Here is a 682-residue protein sequence, read N- to C-terminus: MPSLRTRREEAEMELSAPGPSPWTPAAQARVSDAPAVTHPGSAACGTPCCSDTELEAICPHYQQPDCDTRTEDKEFLHKEDIHEDLESQAEISENYAGDVFQVPKLGDLCDDVSERDWGVPEGRRLPQSLSQEGDFTPAAMGLLRGPLGEKDLDCNGFDSRFSLSPNLMACQEIPXXERPHPYDMGGQSFQHSVDLTGHEGVPTAESPLICNECGKTFRGNPDLIQRQIVHTGEASFMCDDCGKTFSQNSVLKNRHRSHMSEKAYQCSECGKAFRGHSDFSRHQSHHSSERPYTCTECGKAFSQNSSLKKHQKSHMSEKPYECNECGKAFRRSSNLIQHQRIHSGEKPYVCSECGKAFRRSSNLIKHHRTHTGEKPFECGECGKAFSQSAHLRKHQRVHTGEKPYECNDCGKPFSRVSNLIKHHRVHTGEKPYKCSDCGKXFSQSSSLIQHRRIHTGEKPHVCNVCGKAFSYSSVLRKHQIIHTGEKPYRCSVCGKAFSHSSALIQHQGVHTGDKPYACHECGKTFGRSSNLILHQRVHTGEKPYECTECGKTFSQSSTLIQHQRIHNGLKPHECNQCGKAFNRSSNLIHHQKVHTGEKPYTCVECGKGFSQSSHLIQHQIIHTGERPYKCSECGKAFSQRSVLIQHQRIHTGVKPYDCAACGKAFSQRSKLIKHQLIHTRE.

A compositionally biased stretch (basic and acidic residues) spans 1 to 10 (MPSLRTRREE). Positions 1–38 (MPSLRTRREEAEMELSAPGPSPWTPAAQARVSDAPAVT) are disordered. A necessary for transcription activation region spans residues 62-210 (YQQPDCDTRT…GVPTAESPLI (149 aa)). The segment at 209–231 (LICNECGKTFRGNPDLIQRQIVH) adopts a C2H2-type 1; degenerate zinc-finger fold. A C2H2-type 2; degenerate zinc finger spans residues 237–259 (FMCDDCGKTFSQNSVLKNRHRSH). Residue Lys253 forms a Glycyl lysine isopeptide (Lys-Gly) (interchain with G-Cter in SUMO2) linkage. 8 consecutive C2H2-type zinc fingers follow at residues 265–287 (YQCS…QSHH), 293–315 (YTCT…QKSH), 321–343 (YECN…QRIH), 349–371 (YVCS…HRTH), 377–399 (FECG…QRVH), 405–427 (YECN…HRVH), 433–455 (YKCS…RRIH), and 461–483 (HVCN…QIIH). 2 required for nuclear localization regions span residues 268-393 (SECG…AHLR) and 341-373 (RIHS…THTG). Residues 473 to 503 (SSVLRKHQIIHTGEKPYRCSVCGKAFSHSSA) are required for nuclear localization. Lys487 carries the post-translational modification N6-acetyllysine. C2H2-type zinc fingers lie at residues 489–511 (YRCS…QGVH), 517–539 (YACH…QRVH), 545–567 (YECT…QRIH), 573–595 (HECN…QKVH), 601–623 (YTCV…QIIH), 629–651 (YKCS…QRIH), and 657–679 (YDCA…QLIH).

It belongs to the krueppel C2H2-type zinc-finger protein family. As to quaternary structure, interacts with INCA1; the interaction inhibits INCA1 activity and induces the cell cycle process.

It is found in the nucleus. Its function is as follows. Acts as a transcriptional activator. Promotes cell proliferation by facilitating the cell cycle phase transition from the S to G2/M phase. Involved in both the hemin- and phorbol myristate acetate (PMA)-induced erythroid and megakaryocytic differentiation, respectively. Also plays a role as an inhibitor of cell apoptosis. The protein is Zinc finger protein 16 (ZNF16) of Pan troglodytes (Chimpanzee).